The chain runs to 3567 residues: Sushi, von Willebrand factor type A, EGF and pentraxin domain-containing protein 1 (3567 aa).

The signal sequence occupies residues 1-17 (MWSRLAFCCWALALVSG). One can recognise a VWFA domain in the interval 84-265 (ELVFLVDESS…LARRALHEDL (182 aa)). An N-linked (GlcNAc...) asparagine glycan is attached at N187. Sushi domains follow at residues 377-436 (VHCP…FCRV), 437-496 (RTCP…RCVE), and 497-561 (RHCA…VCKD). Cystine bridges form between C379–C421, C407–C434, C439–C481, C467–C494, C499–C544, and C530–C559. HYR domains follow at residues 560–644 (KDVE…KVID) and 645–724 (VEPP…VIKG). The Sushi 4 domain occupies 725–789 (SPCEVPFTPV…YSTEWPDCAI (65 aa)). Disulfide bonds link C727/C769, C753/C787, C1196/C1207, C1201/C1216, C1218/C1227, C1234/C1245, C1239/C1254, C1256/C1265, C1272/C1283, C1277/C1292, C1294/C1303, C1310/C1321, C1315/C1330, C1332/C1341, C1348/C1359, C1353/C1368, C1370/C1379, C1386/C1397, C1391/C1406, and C1408/C1417. Residues 1192–1228 (VFHECFLNPCHNSGTCQQLGRGYVCLCPPGYTGLKCE) enclose the EGF-like 1 domain. Residues 1230-1266 (DIDECSSLPCLNGGICRDQVGGFTCECSLGYSGQICE) form the EGF-like 2; calcium-binding domain. Positions 1268-1304 (NINECISSPCLNKGTCTDGLASYRCTCVKGYMGVHCE) constitute an EGF-like 3; calcium-binding domain. The EGF-like 4; calcium-binding domain maps to 1306-1342 (DVNECQSSPCLNNAVCKDQVGGFSCKCPPGFLGTRCE). Residues 1344 to 1380 (NVDECLSQPCQNGATCKDGANSFRCQCPAGFTGTHCE) form the EGF-like 5; calcium-binding domain. In terms of domain architecture, EGF-like 6; calcium-binding spans 1382 to 1418 (NINECQSNPCRNQATCVDELNSYSCKCQPGFSGHRCE). The Pentraxin (PTX) domain maps to 1423–1627 (SGFNLDFEVS…VKVDSSSMFC (205 aa)). 2 Sushi domains span residues 1628–1686 (SDCP…HCER) and 1687–1744 (IRCG…SCLD). 35 disulfides stabilise this stretch: C1630–C1671, C1657–C1684, C1689–C1729, C1715–C1742, C1748–C1760, C1754–C1769, C1771–C1782, C1788–C1828, C1814–C1841, C1846–C1886, C1872–C1899, C1904–C1944, C1930–C1957, C1962–C2002, C1988–C2015, C2020–C2060, C2046–C2077, C2082–C2125, C2111–C2140, C2145–C2185, C2171–C2198, C2203–C2244, C2230–C2258, C2263–C2303, C2289–C2317, C2322–C2362, C2348–C2375, C2380–C2421, C2407–C2434, C2439–C2479, C2465–C2492, C2497–C2537, C2523–C2550, C2555–C2595, and C2581–C2607. In terms of domain architecture, EGF-like 7; calcium-binding spans 1744-1783 (DVDECAVGSDCSEHASCLNTNGSYVCSCNPPYTGDGKNCA). Sushi domains follow at residues 1780–1843 (KNCA…SCEA), 1844–1901 (ISCG…VCEL), 1902–1959 (VKCS…SCQL), 1960–2017 (VSCG…QCLA), 2018–2079 (VSCD…RCIA), 2080–2142 (HFCE…QCIP), 2143–2200 (VRCG…TCHP), 2201–2260 (VSCN…SCTP), 2261–2319 (LNCG…KCVP), 2320–2377 (TKCA…ICKM), 2378–2436 (VLCP…ECVP), 2437–2494 (VECP…MCKP), 2495–2552 (IECP…SCDA), and 2553–2609 (IHCS…TCVP). The important for the interaction with integrin ITGA9:ITGB1 stretch occupies residues 2638–2645 (DMMEVPYL). Sushi domains are found at residues 2660–2711 (NTKE…SCIS), 2712–2769 (IECD…RCEA), 2770–2827 (ISCS…MCIP), 2828–2885 (VDCG…SCMP), 2886–2943 (VRCP…VCKP), 2944–3001 (ATCG…SCLP), 3002–3057 (CRCS…LCEH), 3058–3115 (AQCG…TCEP), 3116–3174 (LSCG…TCSP), 3175–3234 (KKCP…SCIP), 3235–3292 (VVCG…VCRE), 3293–3350 (NRCE…LCKP), 3351–3409 (NPCP…RCEK), and 3410–3466 (ISCG…VCRA). Disulfide bonds link C2682-C2709, C2714-C2754, C2740-C2767, C2772-C2812, C2798-C2825, C2830-C2870, C2856-C2883, C2888-C2928, C2914-C2941, C2946-C2986, C2972-C2999, C3004-C3043, C3029-C3055, C3060-C3100, C3086-C3113, C3118-C3159, C3144-C3172, C3177-C3217, C3203-C3232, C3237-C3277, C3263-C3290, C3295-C3335, C3321-C3348, C3353-C3394, C3380-C3407, C3412-C3452, C3438-C3464, C3500-C3510, C3504-C3516, C3518-C3527, C3532-C3542, C3536-C3548, and C3550-C3559. 2 EGF-like domains span residues 3496 to 3528 (EEPI…SRCH) and 3529 to 3560 (TATC…HDCS).

In terms of assembly, interacts (via Sushi domain 21) with ITGA9:ITGB1; thereby inhibits Ca(2+) intracellular signaling and as a result represses vasocontraction. Interacts (via Sushi domain 21) with ITGA4:ITGB1; thereby inhibits Ca(2+) intracellular signaling and as a result represses vasocontraction. Interacts with ANGPT1 and ANGPT2. Interacts with PEAR1 (via extracellular domain). Interacts with HSPG2, TLN1, FN1, COPA, CCT2, IQGAP1, LAMC1 and NID1. Interacts (via C-terminus) with TIE1. As to expression, expressed in the media layer of the arterial wall (at protein level). Highly expressed in lung and placenta, weakly expressed in the kidney, heart, brain and spleen. Also expressed in bone and periosteum, but not in cartilage and skeletal muscle.

It is found in the secreted. It localises to the nucleus. The protein resides in the cytoplasm. The protein localises to the membrane. In terms of biological role, required for morphological development, cell alignment and migration of lymphatic endothelial cells during embryonic development, potentially via modulation of ANGPT2-TIE1 signaling and subsequent activation of FOXC2 transcription. Required for embryonic lymphatic vascular development, via mediating the correct formation of the first lymphovenous contact site and tight association of the lymphatic endothelium with the venous endothelium. Represses PRKCA-mediated L-type voltage-gated channel Ca(2+) influx and ROCK-mediated calcium sensitivity in vascular smooth muscle cells, via its interaction with integrins, thereby inhibiting vasocontraction. Promotes platelet activation, via its interaction with PEAR1 and subsequent activation of AKT/mTOR signaling. Plays a role in epidermal development and keratinocyte differentiation, independent of cell-cell adhesion. May play a role in initial cell attachment of stromal osteogenic cells. May promote myoblast cell adhesion when in the presence of integrin ITGA9:ITGB1. The sequence is that of Sushi, von Willebrand factor type A, EGF and pentraxin domain-containing protein 1 (Svep1) from Mus musculus (Mouse).